The sequence spans 333 residues: Adenosine deaminase (333 aa).

Positions 12 and 14 each coordinate Zn(2+). His14, Asp16, and Gly170 together coordinate substrate. Residue His197 coordinates Zn(2+). The active-site Proton donor is Glu200. Asp278 serves as a coordination point for Zn(2+). Substrate is bound at residue Asp279.

This sequence belongs to the metallo-dependent hydrolases superfamily. Adenosine and AMP deaminases family. Adenosine deaminase subfamily. Zn(2+) serves as cofactor.

It catalyses the reaction adenosine + H2O + H(+) = inosine + NH4(+). The catalysed reaction is 2'-deoxyadenosine + H2O + H(+) = 2'-deoxyinosine + NH4(+). In terms of biological role, catalyzes the hydrolytic deamination of adenosine and 2-deoxyadenosine. This Klebsiella pneumoniae (strain 342) protein is Adenosine deaminase.